The chain runs to 179 residues: Large ribosomal subunit protein uL6 (179 aa).

It belongs to the universal ribosomal protein uL6 family. Part of the 50S ribosomal subunit.

Its function is as follows. This protein binds to the 23S rRNA, and is important in its secondary structure. It is located near the subunit interface in the base of the L7/L12 stalk, and near the tRNA binding site of the peptidyltransferase center. The protein is Large ribosomal subunit protein uL6 of Bacillus velezensis (strain DSM 23117 / BGSC 10A6 / LMG 26770 / FZB42) (Bacillus amyloliquefaciens subsp. plantarum).